Here is a 488-residue protein sequence, read N- to C-terminus: Glutamyl-tRNA(Gln) amidotransferase subunit A (488 aa).

Residues K77 and S152 each act as charge relay system in the active site. S176 serves as the catalytic Acyl-ester intermediate.

The protein belongs to the amidase family. GatA subfamily. In terms of assembly, heterotrimer of A, B and C subunits.

It catalyses the reaction L-glutamyl-tRNA(Gln) + L-glutamine + ATP + H2O = L-glutaminyl-tRNA(Gln) + L-glutamate + ADP + phosphate + H(+). Allows the formation of correctly charged Gln-tRNA(Gln) through the transamidation of misacylated Glu-tRNA(Gln) in organisms which lack glutaminyl-tRNA synthetase. The reaction takes place in the presence of glutamine and ATP through an activated gamma-phospho-Glu-tRNA(Gln). The chain is Glutamyl-tRNA(Gln) amidotransferase subunit A from Streptococcus pneumoniae (strain Hungary19A-6).